The sequence spans 588 residues: Aspartate--tRNA ligase (588 aa).

Glu177 is an L-aspartate binding site. The tract at residues Gln201–Lys204 is aspartate. Arg223 contributes to the L-aspartate binding site. Residues Arg223–Glu225 and Gln232 each bind ATP. His451 lines the L-aspartate pocket. Residue Glu485 participates in ATP binding. Arg492 contributes to the L-aspartate binding site. Position 537–540 (Gly537–Arg540) interacts with ATP.

Belongs to the class-II aminoacyl-tRNA synthetase family. Type 1 subfamily. Homodimer.

It is found in the cytoplasm. The enzyme catalyses tRNA(Asp) + L-aspartate + ATP = L-aspartyl-tRNA(Asp) + AMP + diphosphate. In terms of biological role, catalyzes the attachment of L-aspartate to tRNA(Asp) in a two-step reaction: L-aspartate is first activated by ATP to form Asp-AMP and then transferred to the acceptor end of tRNA(Asp). The chain is Aspartate--tRNA ligase from Staphylococcus aureus (strain NCTC 8325 / PS 47).